A 116-amino-acid chain; its full sequence is Urease subunit beta (116 aa).

A disordered region spans residues 97–116 (IQGPLDAGTAETAPGLPQQP).

The protein belongs to the urease beta subunit family. Heterotrimer of UreA (gamma), UreB (beta) and UreC (alpha) subunits. Three heterotrimers associate to form the active enzyme.

The protein resides in the cytoplasm. It carries out the reaction urea + 2 H2O + H(+) = hydrogencarbonate + 2 NH4(+). It functions in the pathway nitrogen metabolism; urea degradation; CO(2) and NH(3) from urea (urease route): step 1/1. The polypeptide is Urease subunit beta (Paracidovorax citrulli (strain AAC00-1) (Acidovorax citrulli)).